Here is a 113-residue protein sequence, read N- to C-terminus: Large ribosomal subunit protein P2 (113 aa).

A disordered region spans residues 66–113 (PVGGGGAVAAADAAPAAAAGGDKKEAKKEEKKEESESEDDDMGFALFE). Residues 73–85 (VAAADAAPAAAAG) are compositionally biased toward low complexity. A compositionally biased stretch (basic and acidic residues) spans 86 to 99 (GDKKEAKKEEKKEE). Phosphoserine is present on residues serine 100 and serine 102.

The protein belongs to the eukaryotic ribosomal protein P1/P2 family. As to quaternary structure, P1 and P2 exist as dimers at the large ribosomal subunit.

Functionally, plays an important role in the elongation step of protein synthesis. The chain is Large ribosomal subunit protein P2 (RpLP2) from Drosophila melanogaster (Fruit fly).